The primary structure comprises 334 residues: Protein NlpD/LppB homolog (334 aa).

In terms of domain architecture, LysM spans 89 to 133; the sequence is IFYIVKSKDTMYSIAKNSGYNYHELSKFNSIKKPYKIIIGQKIWM.

This sequence belongs to the E.coli NlpD/Haemophilus LppB family.

The polypeptide is Protein NlpD/LppB homolog (Buchnera aphidicola subsp. Acyrthosiphon pisum (strain APS) (Acyrthosiphon pisum symbiotic bacterium)).